Consider the following 296-residue polypeptide: 4-diphosphocytidyl-2-C-methyl-D-erythritol kinase (296 aa).

Residue Lys-18 is part of the active site. Pro-103–Ser-113 contributes to the ATP binding site. Asp-146 is a catalytic residue.

Belongs to the GHMP kinase family. IspE subfamily.

The catalysed reaction is 4-CDP-2-C-methyl-D-erythritol + ATP = 4-CDP-2-C-methyl-D-erythritol 2-phosphate + ADP + H(+). It participates in isoprenoid biosynthesis; isopentenyl diphosphate biosynthesis via DXP pathway; isopentenyl diphosphate from 1-deoxy-D-xylulose 5-phosphate: step 3/6. Catalyzes the phosphorylation of the position 2 hydroxy group of 4-diphosphocytidyl-2C-methyl-D-erythritol. The protein is 4-diphosphocytidyl-2-C-methyl-D-erythritol kinase of Solidesulfovibrio magneticus (strain ATCC 700980 / DSM 13731 / RS-1) (Desulfovibrio magneticus).